The sequence spans 790 residues: Alpha,alpha-trehalose-phosphate synthase [UDP-forming] B (790 aa).

This sequence in the N-terminal section; belongs to the glycosyltransferase 20 family. It in the C-terminal section; belongs to the trehalose phosphatase family.

It catalyses the reaction D-glucose 6-phosphate + UDP-alpha-D-glucose = alpha,alpha-trehalose 6-phosphate + UDP + H(+). In terms of biological role, synthesizes trehalose 6-phosphate, the precursor for the production of trehalose, the main carbohydrate storage reserve of the dormant spore. Trehalose accumulates in both prestalk and prespore cells and then is rapidly metabolized during terminal differentiation of stalk cells, while being stored in spores, where it serves as the principal energy and carbon source for germination. The protein is Alpha,alpha-trehalose-phosphate synthase [UDP-forming] B (tpsB) of Dictyostelium discoideum (Social amoeba).